The chain runs to 355 residues: Peptide chain release factor 1 (355 aa).

Glutamine 231 carries the post-translational modification N5-methylglutamine. Residues 283–292 are compositionally biased toward basic and acidic residues; the sequence is LAKETSERKS. A disordered region spans residues 283-306; that stretch reads LAKETSERKSQVGTGDRSGRIRTY.

The protein belongs to the prokaryotic/mitochondrial release factor family. In terms of processing, methylated by PrmC. Methylation increases the termination efficiency of RF1.

The protein resides in the cytoplasm. Peptide chain release factor 1 directs the termination of translation in response to the peptide chain termination codons UAG and UAA. This chain is Peptide chain release factor 1, found in Campylobacter concisus (strain 13826).